We begin with the raw amino-acid sequence, 309 residues long: Formimidoylglutamase (309 aa).

Mn(2+) is bound by residues His-128, Asp-153, His-155, Asp-157, Cys-240, and Asp-242.

This sequence belongs to the arginase family. Mn(2+) serves as cofactor.

It catalyses the reaction N-formimidoyl-L-glutamate + H2O = formamide + L-glutamate. Its pathway is amino-acid degradation; L-histidine degradation into L-glutamate; L-glutamate from N-formimidoyl-L-glutamate (hydrolase route): step 1/1. Catalyzes the conversion of N-formimidoyl-L-glutamate to L-glutamate and formamide. This Staphylococcus carnosus (strain TM300) protein is Formimidoylglutamase.